A 549-amino-acid chain; its full sequence is Glucose-6-phosphate isomerase (549 aa).

E355 acts as the Proton donor in catalysis. Residues H386 and K514 contribute to the active site.

The protein belongs to the GPI family.

Its subcellular location is the cytoplasm. It carries out the reaction alpha-D-glucose 6-phosphate = beta-D-fructose 6-phosphate. It functions in the pathway carbohydrate biosynthesis; gluconeogenesis. It participates in carbohydrate degradation; glycolysis; D-glyceraldehyde 3-phosphate and glycerone phosphate from D-glucose: step 2/4. Catalyzes the reversible isomerization of glucose-6-phosphate to fructose-6-phosphate. The chain is Glucose-6-phosphate isomerase from Buchnera aphidicola subsp. Acyrthosiphon pisum (strain APS) (Acyrthosiphon pisum symbiotic bacterium).